The sequence spans 409 residues: Broad specificity amino-acid racemase (409 aa).

The first 24 residues, 1–24, serve as a signal peptide directing secretion; the sequence is MPFRRTLLAASLVLLITGQAPLYA. A disulfide bond links Cys71 and Cys97. Catalysis depends on Lys75, which acts as the Proton acceptor. Lys75 carries the post-translational modification N6-(pyridoxal phosphate)lysine. A substrate-binding site is contributed by Arg174. Catalysis depends on Tyr301, which acts as the Proton acceptor. Residue Met349 participates in substrate binding.

The protein belongs to the alanine racemase family. Bsr subfamily. Monomer. Forms a head-to-tail homodimer in the structure. Requires pyridoxal 5'-phosphate as cofactor.

The protein resides in the periplasm. The catalysed reaction is an L-alpha-amino acid = a D-alpha-amino acid. It catalyses the reaction L-lysine = D-lysine. It carries out the reaction L-arginine = D-arginine. The enzyme catalyses L-alanine = D-alanine. Activity is enhanced by Co(2+), Mn(2+) and Sr(2+), and decreased by Cu(2+). Amino-acid racemase that catalyzes the interconversion of L-lysine and D-lysine, and L-arginine and D-arginine. To a lesser extent, is also able to interconvert alanine and isoleucine enantiomers. In Pseudomonas putida (Arthrobacter siderocapsulatus), this protein is Broad specificity amino-acid racemase.